Here is a 125-residue protein sequence, read N- to C-terminus: Small ribosomal subunit protein bS6 (125 aa).

The tract at residues Glu-96–Arg-125 is disordered. Over residues Thr-105 to Ser-115 the composition is skewed to basic and acidic residues.

The protein belongs to the bacterial ribosomal protein bS6 family.

Its function is as follows. Binds together with bS18 to 16S ribosomal RNA. The chain is Small ribosomal subunit protein bS6 from Paracidovorax citrulli (strain AAC00-1) (Acidovorax citrulli).